A 146-amino-acid polypeptide reads, in one-letter code: BCL7-like protein (146 aa).

The tract at residues 59–146 is disordered; that stretch reads MAPPKIKEVK…RDAEMTSKQP (88 aa). Polar residues-rich tracts occupy residues 75-90 and 113-134; these read NQVPSAENSQDSTSVT and DSNQTFEPQNYQGGATGSTDFS. A compositionally biased stretch (basic and acidic residues) spans 135 to 146; that stretch reads SMRDAEMTSKQP.

It belongs to the BCL7 family. Ubiquitous.

It is found in the nucleus. In terms of biological role, required for the terminal differentiation of seam cells, and the differentiation of distal tip cells important for normal somatic gonad and germ cell development. Plays a role in the Wnt signaling pathway, regulating the expression of beta-catenin homologs wrm-1, bar-1 and sys-1, and the localization of wrm-1 and the wnt signaling pathway component pop-1 during asymmetric cell division of seam cells and the Z-cell lineage of the somatic gonad, respectively. May have a pro-apoptotic role, possibly linked to the negative regulation of expression of anti-apoptotic factor ced-9. In Caenorhabditis elegans, this protein is BCL7-like protein.